The chain runs to 182 residues: Adenylate kinase (182 aa).

12–17 contributes to the ATP binding site; it reads GAGKGT. Positions 32-61 are NMP; that stretch reads STGDLLRTEVGAKTPLGQEAAAVMNRGELV. AMP is bound by residues Thr33, Arg38, 59–61, 85–88, and Gln92; these read ELV and GFPR. The interval 126 to 132 is LID; that stretch reads SRGRSDD. ATP is bound at residue Arg127. AMP-binding residues include Arg129 and Arg140. Residue Gly168 participates in ATP binding.

The protein belongs to the adenylate kinase family. In terms of assembly, monomer.

Its subcellular location is the cytoplasm. It catalyses the reaction AMP + ATP = 2 ADP. The protein operates within purine metabolism; AMP biosynthesis via salvage pathway; AMP from ADP: step 1/1. Its function is as follows. Catalyzes the reversible transfer of the terminal phosphate group between ATP and AMP. Plays an important role in cellular energy homeostasis and in adenine nucleotide metabolism. In Prochlorococcus marinus (strain MIT 9313), this protein is Adenylate kinase.